The chain runs to 523 residues: Mogroside I-A1 synthase (523 aa).

H39 (proton acceptor) is an active-site residue. D136 (charge relay) is an active-site residue. 8 residues coordinate UDP-alpha-D-glucose: S311, Q374, W392, N393, S394, E397, D413, and Q414.

This sequence belongs to the UDP-glycosyltransferase family. In terms of tissue distribution, highly expressed in young fruits 15 and 34 days after anthesis (15-DAA and 34-DAA).

The catalysed reaction is mogrol + UDP-alpha-D-glucose = mogroside I-A1 + UDP + H(+). The enzyme catalyses mogroside I-A1 + UDP-alpha-D-glucose = mogroside IIE + UDP + H(+). It catalyses the reaction mogroside IE + UDP-alpha-D-glucose = mogroside IIE + UDP + H(+). It carries out the reaction mogroside II-A1 + UDP-alpha-D-glucose = mogroside IIIX + UDP + H(+). The catalysed reaction is mogroside II-A + UDP-alpha-D-glucose = mogroside III + UDP + H(+). The enzyme catalyses mogroside IIE + UDP-alpha-D-glucose = mogroside III-C3(1-&gt;6) + UDP + H(+). It catalyses the reaction mogroside III + UDP-alpha-D-glucose = isomogroside IV + UDP + H(+). It carries out the reaction mogroside III + UDP-alpha-D-glucose = mogroside IV + UDP + H(+). The catalysed reaction is mogroside IIIX + UDP-alpha-D-glucose = mogroside IVA + UDP + H(+). The enzyme catalyses siamenoside I + UDP-alpha-D-glucose = isomogroside V + UDP + H(+). Its pathway is secondary metabolite biosynthesis; terpenoid biosynthesis. Functionally, UDP-glycosyltransferase involved in the biosynthesis of cucurbitacin and mogroside tetracyclic triterpene natural products (e.g. siamenoside I and mogrosides IV, V and VI). Cucurbitacins have cytotoxic properties and exhibit deterrent taste as a defense barrier against herbivores. Mogrosides are nonsugar highly oxygenated compounds used as high-intensity zero-calorie sweeteners; they also possess pharmacological properties such as regulating immunity, lowering blood sugar and lipid levels, protecting the liver, and acting as antioxidants and antitumor agents. Catalyzes the C24 primary glucosylation of mogrol and mogroside I-E1, and the C3 primary glucosylation of mogroside I-A1, mogroside II-A1 and mogroside II-A. Also supports branching glucosylations of mogroside II-E, mogroside III, mogroside IIIx and siamenoside I. In Siraitia grosvenorii (Monk's fruit), this protein is Mogroside I-A1 synthase.